The primary structure comprises 227 residues: UPF0758 protein Psyc_1834 (227 aa).

The region spanning 102–224 (GLGRSQMVKD…TLSYAENCLA (123 aa)) is the MPN domain. Zn(2+) is bound by residues His-173, His-175, and Asp-186. Residues 173 to 186 (HNHPHTDATPSTAD) carry the JAMM motif motif.

Belongs to the UPF0758 family.

This Psychrobacter arcticus (strain DSM 17307 / VKM B-2377 / 273-4) protein is UPF0758 protein Psyc_1834.